A 1123-amino-acid polypeptide reads, in one-letter code: RNA-binding protein 6 (1123 aa).

2 disordered regions span residues 1-391 and 413-454; these read MWGD…EGGL and LPGS…EEKP. Ser-17 is modified (phosphoserine). A Glycyl lysine isopeptide (Lys-Gly) (interchain with G-Cter in SUMO2) cross-link involves residue Lys-36. The segment covering 79–97 has biased composition (basic and acidic residues); the sequence is DGPHGDYRGGEGPGHDFRG. Residues 98–114 show a composition bias toward low complexity; it reads GDFSSSDFQSRDSSQLD. Basic and acidic residues-rich tracts occupy residues 115–131 and 145–237; these read FRGRDIHSGDFRDREGP and YRGR…DFRG. Phosphoserine is present on Ser-240. Basic and acidic residues-rich tracts occupy residues 245 to 286 and 301 to 323; these read LDFR…REMP and QDREHSGMNVNRREESTHDHTIE. A Glycyl lysine isopeptide (Lys-Gly) (interchain with G-Cter in SUMO2) cross-link involves residue Lys-331. Residues 332 to 354 show a composition bias toward basic and acidic residues; that stretch reads GEFEHSETREGETQGVAFEHESP. A Phosphothreonine modification is found at Thr-344. Positions 356–365 are enriched in polar residues; that stretch reads DFQNSQSPVQ. A phosphoserine mark is found at Ser-360 and Ser-362. 2 stretches are compositionally biased toward basic and acidic residues: residues 366 to 391 and 431 to 454; these read DQDKSQLSGREEQSSDAGLFKEEGGL and KTARDAQRDLQDQDYRTGPSEEKP. Residues Lys-386, Lys-453, Lys-469, and Lys-569 each participate in a glycyl lysine isopeptide (Lys-Gly) (interchain with G-Cter in SUMO2) cross-link. Positions 456–536 constitute an RRM domain; sequence RLIRLSGVPE…KEVTLEYVSS (81 aa). 3 disordered regions span residues 574 to 654, 741 to 787, and 827 to 948; these read TYPQ…QDGE, KRRN…QSSS, and EEEI…EEDK. Composition is skewed to basic and acidic residues over residues 597 to 654 and 742 to 754; these read PADK…QDGE and RRNDSGDHSDHMH. The span at 772 to 787 shows a compositional bias: polar residues; it reads SDWSSDTNRQGQQSSS. The span at 843–860 shows a compositional bias: basic and acidic residues; the sequence is SKKEMSKRDGKEKKDRGV. Glycyl lysine isopeptide (Lys-Gly) (interchain with G-Cter in SUMO2) cross-links involve residues Lys-871, Lys-879, and Lys-887. Ser-891 carries the phosphoserine modification. Residues 910-922 are compositionally biased toward acidic residues; sequence GDSDYEEEEEEEQ. The span at 934–948 shows a compositional bias: basic and acidic residues; that stretch reads QKREEQTKKENEEDK. Residues Lys-935, Lys-948, Lys-991, and Lys-1019 each participate in a glycyl lysine isopeptide (Lys-Gly) (interchain with G-Cter in SUMO2) cross-link. The segment covering 1004-1051 has biased composition (basic and acidic residues); it reads EREGKFKGRGNDRREKLQSFDSPERKRIKYSRETDSDRKLVDKEDIDT. Positions 1004-1106 are disordered; sequence EREGKFKGRG…RTSKRQSNET (103 aa). A phosphoserine mark is found at Ser-1022 and Ser-1025. Glycyl lysine isopeptide (Lys-Gly) (interchain with G-Cter in SUMO2) cross-links involve residues Lys-1042, Lys-1046, and Lys-1066. The 47-residue stretch at 1051–1097 folds into the G-patch domain; that stretch reads TSSKGGCVQQATGWRKGTGLGYGHPGLASSEEAEGRMRGPSVGASGR.

As to quaternary structure, may interact with FAM168B. As to expression, ubiquitous in adults.

The protein localises to the nucleus. Its function is as follows. Specifically binds poly(G) RNA homopolymers in vitro. The protein is RNA-binding protein 6 (RBM6) of Homo sapiens (Human).